The sequence spans 267 residues: Elsinochrome reductase 1 (267 aa).

Residues isoleucine 26, aspartate 72, asparagine 99, and arginine 132 each contribute to the NADP(+) site. Catalysis depends on serine 149, which acts as the Proton donor. NADP(+)-binding residues include tyrosine 163, lysine 167, isoleucine 196, and threonine 198. Residue tyrosine 163 is the Proton acceptor of the active site. Catalysis depends on lysine 167, which acts as the Lowers pKa of active site Tyr.

This sequence belongs to the short-chain dehydrogenases/reductases (SDR) family.

In terms of biological role, reductase; part of the gene cluster that mediates the biosynthesis of elsinochromes, pigments consisting of at least four interconvertible tautomers (A, B, C and D) that have a core phenolic quinone to which various side chains are attached and which play an important role in fungal pathogenesis. The non-reducing polyketide synthase PKS1 was proposed to iteratively catalyze decarboxylation between acetyl-CoA and malonyl-CoA subunits for polyketide chain elongation. The released polyketide undergoes cyclization to form an aromatic ring, and proceeds via serial modification steps to produce the heptaketide back- bone of elsinochrome. As elsinochrome has a symmetrical structure, two identical heptaketides are fused to form a core 1,2-dihydrobenzo-perylene ring structure, which can then be successively modified to produce the various derivatives of elsinochrome. Some of these reactions may be cooperatively carried out, at least in part, by the products of RDT1, OXR1 and PKS1. PRF1, embedded within the elsinochrome cluster possibly functions to stabilize some of the biosynthetic enzymes required for elsinochrome production. As prefoldin is a hexamer containing 2 a and 4 b subunits, additional prefoldin subunits, whose coding genes may not immediately link to the elsinochrome biosynthetic gene cluster, are required to fulfill the chaperone function. In addition, no methyltransferase-coding gene exists within the biosynthetic gene cluster, even though elsinochrome has four methyl groups at positions C3, C7, C8 and C12. Apparently, the identified gene cluster does not contain the entire entourage of genes responsible for elsinochrome biosynthesis. Once elsinochrome is synthesized, it must be exported outside the fungal cells, which is probably accomplished by the ECT1 transporter, to avoid toxicity. The protein is Elsinochrome reductase 1 of Elsinoe fawcettii (Citrus scab fungus).